The chain runs to 255 residues: Triosephosphate isomerase (255 aa).

Substrate is bound at residue 9 to 11; sequence NWK. H100 functions as the Electrophile in the catalytic mechanism. E169 (proton acceptor) is an active-site residue. Substrate contacts are provided by residues G175, S208, and 229–230; that span reads GG.

It belongs to the triosephosphate isomerase family. As to quaternary structure, homodimer.

The protein resides in the cytoplasm. It catalyses the reaction D-glyceraldehyde 3-phosphate = dihydroxyacetone phosphate. It participates in carbohydrate biosynthesis; gluconeogenesis. The protein operates within carbohydrate degradation; glycolysis; D-glyceraldehyde 3-phosphate from glycerone phosphate: step 1/1. Involved in the gluconeogenesis. Catalyzes stereospecifically the conversion of dihydroxyacetone phosphate (DHAP) to D-glyceraldehyde-3-phosphate (G3P). This Synechococcus sp. (strain JA-3-3Ab) (Cyanobacteria bacterium Yellowstone A-Prime) protein is Triosephosphate isomerase.